The primary structure comprises 88 residues: Eclosion hormone (88 aa).

The N-terminal stretch at 1-26 is a signal peptide; that stretch reads MAGKVTVAFFMFAMIAFLANFGYVEC. 3 cysteine pairs are disulfide-bonded: Cys40–Cys64, Cys44–Cys60, and Cys47–Cys75.

The protein belongs to the insect eclosion hormone family.

Its subcellular location is the secreted. In terms of biological role, neuropeptide that triggers the performance of ecdysis behaviors at the end of a molt. It triggers adult behavior patterns: larval, pupal and adult ecdysis, and plasticization during the molt. The polypeptide is Eclosion hormone (Manduca sexta (Tobacco hawkmoth)).